The chain runs to 394 residues: Elongation factor Tu (394 aa).

Residues 10-204 (KPHINIGTIG…AVDDNIPTPE (195 aa)) enclose the tr-type G domain. Residues 19–26 (GHVDHGKT) are G1. 19-26 (GHVDHGKT) lines the GTP pocket. Mg(2+) is bound at residue Thr26. The interval 60-64 (GITIN) is G2. The G3 stretch occupies residues 81–84 (DCPG). GTP is bound by residues 81–85 (DCPGH) and 136–139 (NKID). A G4 region spans residues 136–139 (NKID). Positions 174 to 176 (SAL) are G5.

The protein belongs to the TRAFAC class translation factor GTPase superfamily. Classic translation factor GTPase family. EF-Tu/EF-1A subfamily. As to quaternary structure, monomer.

It localises to the cytoplasm. The enzyme catalyses GTP + H2O = GDP + phosphate + H(+). Its function is as follows. GTP hydrolase that promotes the GTP-dependent binding of aminoacyl-tRNA to the A-site of ribosomes during protein biosynthesis. This is Elongation factor Tu from Chlamydia trachomatis serovar L2 (strain ATCC VR-902B / DSM 19102 / 434/Bu).